The following is a 302-amino-acid chain: Meiotic recombination protein rec14 (302 aa).

7 WD repeats span residues 14–51 (AHQADIYSLNVVAGNLWSASGDSKIKKWSIGDAEHSLV), 57–96 (PHKLGVHHLATSLDENVVVSCGFGQDVYVWNPETNEFRDL), 101–140 (QHPSECWSSCISPDGQTIAFTSVDGRIAVWDNPSDCKISE), 142–184 (DTKG…HVLS), 185–226 (GHTS…GQLR), 227–266 (GHAAWIFAVAFNPVGDLLLSADVEGKIKIWDIDTMECIST), and 269–302 (ETDGAIWAVAWYKNGFIVAGADKSIRWYRAAATE).

In terms of assembly, component of the DSB catalytic core (DSBC) complex, composed of at least rec12, rec6 and rec14. The complex interacts with mde2.

Its function is as follows. Required for formation of the rec12-mediated double-strand breaks (DSBs) that initiate meiotic recombination. This Schizosaccharomyces pombe (strain 972 / ATCC 24843) (Fission yeast) protein is Meiotic recombination protein rec14.